The chain runs to 361 residues: Lactate-binding periplasmic protein TTHA0766 (361 aa).

The tat-type signal signal peptide spans Met-1 to Ala-22. Tyr-101, Asn-158, and Arg-178 together coordinate substrate. Position 158 (Asn-158) interacts with Ca(2+). The Ca(2+) site is built by Asp-216, Phe-217, and Gln-247. Substrate-binding positions include Phe-217 and Gln-247–Asp-250.

This sequence belongs to the bacterial solute-binding protein 7 family. As to quaternary structure, homodimer. The complex comprises the extracytoplasmic solute receptor protein TTHA0766, and the two putative transmembrane proteins TTHA0767 and TTHA0768.

It localises to the periplasm. Its function is as follows. Part of the tripartite ATP-independent periplasmic (TRAP) transport system involved in the uptake of lactate. This protein specifically binds L-lactate. This chain is Lactate-binding periplasmic protein TTHA0766, found in Thermus thermophilus (strain ATCC 27634 / DSM 579 / HB8).